Here is a 68-residue protein sequence, read N- to C-terminus: Large ribosomal subunit protein uL29 (68 aa).

This sequence belongs to the universal ribosomal protein uL29 family.

This chain is Large ribosomal subunit protein uL29, found in Streptococcus sanguinis (strain SK36).